We begin with the raw amino-acid sequence, 101 residues long: MSVTTIKDPRDVVLAPVVSEKSYGLIDEGKYTFLVDPRSNKTEIKLAVEKIFSVKVDSINTINRAGKRKRTKFGWGQRKSTKRAIVTLKEGTIDIFGGPLA.

It belongs to the universal ribosomal protein uL23 family. Part of the 50S ribosomal subunit. Contacts protein L29, and trigger factor when it is bound to the ribosome.

Its function is as follows. One of the early assembly proteins it binds 23S rRNA. One of the proteins that surrounds the polypeptide exit tunnel on the outside of the ribosome. Forms the main docking site for trigger factor binding to the ribosome. This is Large ribosomal subunit protein uL23 from Paenarthrobacter aurescens (strain TC1).